The sequence spans 381 residues: Terpene cyclase ATR13 (381 aa).

The protein belongs to the terpene synthase family.

The protein operates within mycotoxin biosynthesis. Terpene cyclase; part of the core atranone cluster (CAC) which products are predicted to catalyze most or all steps of mycotoxin atranone synthesis, starting from geranylgeranyl pyrophosphate (GGPP). The initial cyclization of GGPP to dolabellane is probably performed by the terpene cyclase ATR13. The Baeyer-Villiger oxidation near the end of the atranone synthesis, which converts atranones D and E to atranones F and G is predicted to be catalyzed by the monooxygenase ATR8. Of the CAC's other predicted gene products, the reducing PKS ATR6 might synthesize a polyketide chain. This polyketide is probably transferred onto the atranone backbone by the polyketide transferase ATR5. Other predicted CAC products include 4 oxygenases (ATR2, ATR3, ATR4, and ATR14), 3 short-chain reductases (ATR7, ATR9, and ATR10), and a methyltransferase (ATR12). These may all be involved in the various steps of atranone biosynthesis, although their specific roles must await experimental determination. The protein is Terpene cyclase ATR13 of Stachybotrys chlorohalonatus (strain IBT 40285).